The primary structure comprises 435 residues: Nematode resistance protein-like HSPRO2 (435 aa).

Interacts with SNF4.

It is found in the cytoplasm. Functionally, positive regulator of basal resistance. In Arabidopsis thaliana (Mouse-ear cress), this protein is Nematode resistance protein-like HSPRO2 (HSPRO2).